A 117-amino-acid polypeptide reads, in one-letter code: Flagellar transcriptional regulator FlhD (117 aa).

Belongs to the FlhD family. As to quaternary structure, homodimer; disulfide-linked. Forms a heterohexamer composed of two FlhC and four FlhD subunits. Each FlhC binds a FlhD dimer, forming a heterotrimer, and a hexamer assembles by dimerization of two heterotrimers.

The protein resides in the cytoplasm. Its function is as follows. Functions in complex with FlhC as a master transcriptional regulator that regulates transcription of several flagellar and non-flagellar operons by binding to their promoter region. Activates expression of class 2 flagellar genes, including fliA, which is a flagellum-specific sigma factor that turns on the class 3 genes. Also regulates genes whose products function in a variety of physiological pathways. In Photorhabdus laumondii subsp. laumondii (strain DSM 15139 / CIP 105565 / TT01) (Photorhabdus luminescens subsp. laumondii), this protein is Flagellar transcriptional regulator FlhD.